We begin with the raw amino-acid sequence, 451 residues long: Probable glycine dehydrogenase (decarboxylating) subunit 1 (451 aa).

Belongs to the GcvP family. N-terminal subunit subfamily. The glycine cleavage system is composed of four proteins: P, T, L and H. In this organism, the P 'protein' is a heterodimer of two subunits.

It carries out the reaction N(6)-[(R)-lipoyl]-L-lysyl-[glycine-cleavage complex H protein] + glycine + H(+) = N(6)-[(R)-S(8)-aminomethyldihydrolipoyl]-L-lysyl-[glycine-cleavage complex H protein] + CO2. The glycine cleavage system catalyzes the degradation of glycine. The P protein binds the alpha-amino group of glycine through its pyridoxal phosphate cofactor; CO(2) is released and the remaining methylamine moiety is then transferred to the lipoamide cofactor of the H protein. This is Probable glycine dehydrogenase (decarboxylating) subunit 1 from Thioalkalivibrio sulfidiphilus (strain HL-EbGR7).